Reading from the N-terminus, the 236-residue chain is uncharacterized protein (236 aa).

A run of 7 helical transmembrane segments spans residues 32 to 52 (MALA…VEPI), 61 to 81 (FGTI…MGFG), 90 to 110 (ILFW…ALIY), 115 to 135 (IART…YGYS), 144 to 164 (GSFF…NLFL), 167 to 187 (SSLS…LIAW), and 208 to 228 (LSIM…LYLM).

This sequence belongs to the BI1 family.

It localises to the cell membrane. This is an uncharacterized protein from Rickettsia prowazekii (strain Madrid E).